The following is a 427-amino-acid chain: tRNA(Ile)-lysidine synthase (427 aa).

Serine 27–serine 32 lines the ATP pocket.

This sequence belongs to the tRNA(Ile)-lysidine synthase family.

It is found in the cytoplasm. The catalysed reaction is cytidine(34) in tRNA(Ile2) + L-lysine + ATP = lysidine(34) in tRNA(Ile2) + AMP + diphosphate + H(+). Its function is as follows. Ligates lysine onto the cytidine present at position 34 of the AUA codon-specific tRNA(Ile) that contains the anticodon CAU, in an ATP-dependent manner. Cytidine is converted to lysidine, thus changing the amino acid specificity of the tRNA from methionine to isoleucine. In Streptococcus equi subsp. zooepidemicus (strain H70), this protein is tRNA(Ile)-lysidine synthase.